The following is an 802-amino-acid chain: Leucine--tRNA ligase (802 aa).

The 'HIGH' region signature appears at 40-51 (PYPSGAGLHVGH). Residues 576 to 580 (KMSKS) carry the 'KMSKS' region motif. Lys579 contacts ATP.

Belongs to the class-I aminoacyl-tRNA synthetase family.

The protein localises to the cytoplasm. The catalysed reaction is tRNA(Leu) + L-leucine + ATP = L-leucyl-tRNA(Leu) + AMP + diphosphate. The polypeptide is Leucine--tRNA ligase (Bacillus cytotoxicus (strain DSM 22905 / CIP 110041 / 391-98 / NVH 391-98)).